The sequence spans 753 residues: 5-methyltetrahydropteroyltriglutamate--homocysteine methyltransferase (753 aa).

5-methyltetrahydropteroyltri-L-glutamate contacts are provided by residues 17-20 (RELK) and lysine 117. Residues 431–433 (IGS) and glutamate 484 contribute to the L-homocysteine site. L-methionine is bound by residues 431-433 (IGS) and glutamate 484. 5-methyltetrahydropteroyltri-L-glutamate-binding positions include 515–516 (RC) and tryptophan 561. Aspartate 599 is an L-homocysteine binding site. Aspartate 599 provides a ligand contact to L-methionine. Glutamate 605 serves as a coordination point for 5-methyltetrahydropteroyltri-L-glutamate. Zn(2+)-binding residues include histidine 641, cysteine 643, and glutamate 665. Histidine 694 acts as the Proton donor in catalysis. Cysteine 726 is a Zn(2+) binding site.

It belongs to the vitamin-B12 independent methionine synthase family. The cofactor is Zn(2+).

It carries out the reaction 5-methyltetrahydropteroyltri-L-glutamate + L-homocysteine = tetrahydropteroyltri-L-glutamate + L-methionine. It functions in the pathway amino-acid biosynthesis; L-methionine biosynthesis via de novo pathway; L-methionine from L-homocysteine (MetE route): step 1/1. Catalyzes the transfer of a methyl group from 5-methyltetrahydrofolate to homocysteine resulting in methionine formation. This chain is 5-methyltetrahydropteroyltriglutamate--homocysteine methyltransferase, found in Shigella dysenteriae serotype 1 (strain Sd197).